A 115-amino-acid polypeptide reads, in one-letter code: Small ribosomal subunit protein uS14m (115 aa).

It belongs to the universal ribosomal protein uS14 family. Component of the mitochondrial small ribosomal subunit (mt-SSU). Mature yeast 74S mitochondrial ribosomes consist of a small (37S) and a large (54S) subunit. The 37S small subunit contains a 15S ribosomal RNA (15S mt-rRNA) and 34 different proteins. The 54S large subunit contains a 21S rRNA (21S mt-rRNA) and 46 different proteins.

Its subcellular location is the mitochondrion. Its function is as follows. Component of the mitochondrial ribosome (mitoribosome), a dedicated translation machinery responsible for the synthesis of mitochondrial genome-encoded proteins, including at least some of the essential transmembrane subunits of the mitochondrial respiratory chain. The mitoribosomes are attached to the mitochondrial inner membrane and translation products are cotranslationally integrated into the membrane. This chain is Small ribosomal subunit protein uS14m (MRP2), found in Saccharomyces cerevisiae (strain ATCC 204508 / S288c) (Baker's yeast).